A 2035-amino-acid polypeptide reads, in one-letter code: MDRNYPSAGFGDPLGAGAGWSYERSAKASLVYGSSRTSHPETDILHRQAYAAPHPLQSYATNHHPAGLSGLFDTGLHHAGSAGPDASVMNLISALESRGPQPGPSASSLLSQFRSPSWQTAMHTPGPTELFISGALPGSSTFPSSSALSAYQHPASFGSRPFPVPSSLSLQDPPFSPPANGLLSPHDVLHLKPSQAPTVPSSLGFERLAGGGVLGPAGLGPAQTPPYRPGPPDPPPPPRHLPTQFNLLASSSAATAAEPSSPQLYNFSGAAPGPPPERALPRQDTVIKHYQRPASAQPPPPPPPAHSLQHYLSCGGSYPSMGHRASLACSPLGGGEPSPGAGEPSKGGPSGATAGAAGRATGPETAGGGAAGGGGGYRPIIQSPGYKTSKGGYGPATGGATRPPPPRSTATPKCQSLGGPAAAYAAGKASGAGGAGSQAYSPGQPQGLLGPQAYGQGFGGGQAQDLSKGPSYSGGPPQPPSGPPPPGLATCQSYSPDQLQGQLYGVQSEPYPGPAAHSQGLPTASPSLSYSTGHSPALSGHGGGWGPSSLGGGGEASPSHIIRPLQSPPATGRPPGVGSPGAPGKYLSSVLASAPFLAPPGASSYAAGAGGYKGKGDGSELLAGPGGSAAERTEDEEFLIQHLLQAPSPPRTSGADGLVGEDGPADAAKGLGGSGGAGGAPGTPYELAKEDPQRYHLQSVIRTSASLDEGATAALELGLGRMKDKKKGPERGGETPEGLATSVVHYGAGAKELGAFLQKSPPPPPPSAQATQPAPHGLLLEAGGPDLPMVLPPPPPQLLPSVLSHAPSPSPSAPKVGVHLLEPATRDGAPQPPPPPPPPMPLQLEAHLRGHGLEPTAPSPRLRPEESLEPPGAMQELLGALEPLPSGPGDPGVGPPNSEGKDPAGAYRSPSPQGTKAPRFVPLTSICFPDSLLQDEERSFFPTMEEMFGGGAADDYGKAGQTEDDGDPKTGAGPPPGPTAYDPYGPYCGGRASGTGPETPGLGLDHNKPPELPSTVNAEPLGLIQSGPHQSAPPPPPPPPPPPPVSEPKGGLTSPIFCSTKPKKLLKTSSFHLLRRRDPPFQTPKKLYAQEYEFEADEDKADVPADIRLNPRRLPDLVSSCRSRPALSPLGDIDFCPPNPGPDGPRRRGRKPTKAKRDGPPRPRGRPRIRPLEGPAMAGPASITTDGAKKPRGRGRGRGRKAEEMGGTRLEPLKPLKIKLSVPKAGEGLGAPSNDVISGVDHNSLDSNLTREKIEAKIKEVEEKQPEMKSGFMASFLDFLKSGKRHPPLYQAGLTPPLSPPKSVPASVPTRGLQPPPPTVPTVPHPAPSGPFGLGGALEAAESEGLGLGCPSPCKRLDEELKRNLETLPSFSSDEEDSVAKNRDLQESISSAISALDDPPLTGPKDTSTPEEPPLDTGPTASGPPPLPSLPSSNSSGTPEPPLLEEKPPPTPPPAPTPQPAPPPPPPPPPVPALPSPTPLVTPVASSPPPPPPPPPPPPALPSPPPPPPPAPTTVPPVAPPEEPPAPSPEDPEPPDARPLHLAKKQETAAVCGETDEEAGESGGEGIFRERDEFVIRAEDIPSLKLALQTGREPPPIWRVQKALLQKFTPEIKDGQRQFCATSNYLGYFGDAKNRYQRLYVKFLENVNKKDYVRVCARKPWHRPPLPVRRSGQTKGPTPVGGNSAPPSKVQAPPPKPETPEKMTSEKPPEPAPEPAVPEPPAPEKPSPPRPVEKEKEKEKEKEKEKERVTRPLRSERATSGRQMRTDRSLATGQSTTSRLPKARPSKVKAEPPPKKRKKWLKEAVGNASAGDGPGGSSSDSESSPGAPSEDERAVPGRLLKTRAMREMYRSYVEMLVSTALDPDMIQALEDTHDELYLPPMRKIDGLLNEHKKKVLKRLSLSPALQDALHTFPQLQVEQTGEGSPEEGAVRLRPAGEPYNRKTLSKLKRSVVRAQEFKVELEKSGYYTLYHSLHHYKYHTFLRCRDQTLAIEGGAEDLGQEEVVQQCMRNQPWLEQLFDSFSDLLAQAQAHSRCG.

4 disordered regions span residues 210–280, 292–311, 329–584, and 645–685; these read GGGV…ERAL, RPASAQPPPPPPPAHSLQHY, CSPL…GAPG, and QAPS…GTPY. Residues 223–240 show a composition bias toward pro residues; the sequence is QTPPYRPGPPDPPPPPRH. Positions 249 to 261 are enriched in low complexity; the sequence is ASSSAATAAEPSS. Over residues 296 to 305 the composition is skewed to pro residues; sequence AQPPPPPPPA. S330 and S338 each carry phosphoserine. Low complexity predominate over residues 338-364; the sequence is SPGAGEPSKGGPSGATAGAAGRATGPE. The segment covering 365 to 377 has biased composition (gly residues); sequence TAGGGAAGGGGGY. 2 stretches are compositionally biased toward low complexity: residues 408–429 and 437–455; these read STATPKCQSLGGPAAAYAAGKA and SQAYSPGQPQGLLGPQAYG. Over residues 476–487 the composition is skewed to pro residues; it reads PPQPPSGPPPPG. 2 stretches are compositionally biased toward polar residues: residues 490–501 and 520–534; these read TCQSYSPDQLQG and GLPTASPSLSYSTGH. Residues 540–555 show a composition bias toward gly residues; sequence GHGGGWGPSSLGGGGE. Position 648 is a phosphoserine (S648). Gly residues predominate over residues 670-681; the sequence is GLGGSGGAGGAP. T735 is modified (phosphothreonine). Disordered regions lie at residues 755–844, 851–870, 879–920, and 946–1061; these read AFLQ…PLQL, HGLEPTAPSPRLRPEESLEP, GALE…APRF, and EMFG…CSTK. Pro residues predominate over residues 830–841; sequence PQPPPPPPPPMP. S859 is subject to Phosphoserine. The segment covering 1031 to 1046 has biased composition (pro residues); that stretch reads SAPPPPPPPPPPPPVS. 2 positions are modified to phosphoserine: S1070 and S1128. 4 disordered regions span residues 1112 to 1244, 1288 to 1355, 1367 to 1567, and 1662 to 1839; these read RRLP…DHNS, PLYQ…SPCK, TLPS…GEGI, and HRPP…PGRL. The segment covering 1190 to 1199 has biased composition (basic residues); sequence KPRGRGRGRG. Residues 1200–1214 are compositionally biased toward basic and acidic residues; the sequence is RKAEEMGGTRLEPLK. Position 1214 is an N6-acetyllysine (K1214). A Phosphothreonine modification is found at T1295. Position 1299 is a phosphoserine (S1299). Pro residues predominate over residues 1314 to 1329; the sequence is QPPPPTVPTVPHPAPS. A phosphoserine mark is found at S1372, S1373, and S1378. The segment covering 1449-1529 has biased composition (pro residues); it reads PPTPPPAPTP…PPEEPPAPSP (81 aa). A compositionally biased stretch (basic and acidic residues) spans 1535–1547; it reads PDARPLHLAKKQE. Position 1555 is a phosphothreonine (T1555). A Phosphoserine modification is found at S1562. Positions 1698–1709 are enriched in basic and acidic residues; sequence ETPEKMTSEKPP. T1699 carries the post-translational modification Phosphothreonine. Pro residues predominate over residues 1710-1730; sequence EPAPEPAVPEPPAPEKPSPPR. Basic and acidic residues predominate over residues 1731 to 1768; it reads PVEKEKEKEKEKEKEKERVTRPLRSERATSGRQMRTDR. Positions 1769-1779 are enriched in polar residues; sequence SLATGQSTTSR. Residues 1817–1828 show a composition bias toward low complexity; that stretch reads SSSDSESSPGAP. S1924 bears the Phosphoserine mark.

In terms of tissue distribution, expressed in brain.

Its subcellular location is the nucleus. The protein localises to the postsynaptic density. It localises to the synapse. The protein resides in the synaptosome. The sequence is that of Proline-rich protein 12 from Mus musculus (Mouse).